The primary structure comprises 515 residues: 2-isopropylmalate synthase (515 aa).

The Pyruvate carboxyltransferase domain occupies 5–267 (VIIFDTTLRD…RTGINHEEIH (263 aa)). Mn(2+)-binding residues include D14, H202, H204, and N238. The segment at 392–515 (KLNYLSVQSG…EMKQKKIATV (124 aa)) is regulatory domain.

It belongs to the alpha-IPM synthase/homocitrate synthase family. LeuA type 1 subfamily. In terms of assembly, homodimer. The cofactor is Mn(2+).

The protein resides in the cytoplasm. The enzyme catalyses 3-methyl-2-oxobutanoate + acetyl-CoA + H2O = (2S)-2-isopropylmalate + CoA + H(+). It functions in the pathway amino-acid biosynthesis; L-leucine biosynthesis; L-leucine from 3-methyl-2-oxobutanoate: step 1/4. Catalyzes the condensation of the acetyl group of acetyl-CoA with 3-methyl-2-oxobutanoate (2-ketoisovalerate) to form 3-carboxy-3-hydroxy-4-methylpentanoate (2-isopropylmalate). The chain is 2-isopropylmalate synthase from Vibrio vulnificus (strain CMCP6).